A 234-amino-acid polypeptide reads, in one-letter code: Large ribosomal subunit protein eL6 (234 aa).

Belongs to the eukaryotic ribosomal protein eL6 family.

The polypeptide is Large ribosomal subunit protein eL6 (RPL6) (Mesembryanthemum crystallinum (Common ice plant)).